Consider the following 603-residue polypeptide: Terpenoid synthase 22 (603 aa).

Mg(2+)-binding residues include D356, D360, N500, and E508. The DDXXD motif motif lies at 356 to 360 (DDTCD).

This sequence belongs to the terpene synthase family. Tpsa subfamily. Mg(2+) is required as a cofactor. The cofactor is Mn(2+). In terms of tissue distribution, predominantly expressed in siliques but also in flowers.

The protein localises to the cytoplasm. It functions in the pathway secondary metabolite biosynthesis; terpenoid biosynthesis. Involved in terpene biosynthesis in roots. Possesses sesquiterpene (C15) synthase activity in vitro. Does not seem to be involved in diterpene (C20) biosynthesis. The polypeptide is Terpenoid synthase 22 (Arabidopsis thaliana (Mouse-ear cress)).